A 482-amino-acid chain; its full sequence is Cytochrome c-552 (482 aa).

The N-terminal stretch at 1–26 is a signal peptide; it reads MIKVSNALQRILIGAALALFGGGAQA. A heme c-binding site is contributed by H98. The heme site is built by C126, C129, and K130. 6 residues coordinate heme c: C164, C167, H168, C213, C216, and H217. Ca(2+) contacts are provided by E219, Y220, K265, and Q267. Y220 is a substrate binding site. H268 lines the substrate pocket. Residues H279, C286, C289, H290, H305, C318, C321, H322, and H397 each contribute to the heme c site.

Belongs to the cytochrome c-552 family. The cofactor is Ca(2+). It depends on heme c as a cofactor.

It localises to the periplasm. The enzyme catalyses 6 Fe(III)-[cytochrome c] + NH4(+) + 2 H2O = 6 Fe(II)-[cytochrome c] + nitrite + 8 H(+). It participates in nitrogen metabolism; nitrate reduction (assimilation). In terms of biological role, catalyzes the reduction of nitrite to ammonia, consuming six electrons in the process. In Edwardsiella ictaluri (strain 93-146), this protein is Cytochrome c-552.